Here is a 189-residue protein sequence, read N- to C-terminus: Adenine phosphoribosyltransferase (189 aa).

This sequence belongs to the purine/pyrimidine phosphoribosyltransferase family. As to quaternary structure, homodimer.

It localises to the cytoplasm. It carries out the reaction AMP + diphosphate = 5-phospho-alpha-D-ribose 1-diphosphate + adenine. Its pathway is purine metabolism; AMP biosynthesis via salvage pathway; AMP from adenine: step 1/1. In terms of biological role, catalyzes a salvage reaction resulting in the formation of AMP, that is energically less costly than de novo synthesis. The chain is Adenine phosphoribosyltransferase from Frankia alni (strain DSM 45986 / CECT 9034 / ACN14a).